A 168-amino-acid chain; its full sequence is Putative peroxiredoxin prxA (168 aa).

In terms of domain architecture, Thioredoxin spans 4-158 (LKAGDSFPAD…LEPAKNHLEF (155 aa)). C61 acts as the Cysteine sulfenic acid (-SOH) intermediate in catalysis.

The protein belongs to the peroxiredoxin family. Prx5 subfamily. Homodimer; disulfide-linked, upon oxidation. Interacts with thioredoxin trxA.

It carries out the reaction a hydroperoxide + [thioredoxin]-dithiol = an alcohol + [thioredoxin]-disulfide + H2O. Thiol-specific peroxidase that catalyzes the reduction of hydrogen peroxide and organic hydroperoxides to water and alcohols, respectively. Plays a role in cell protection against oxidative stress by detoxifying peroxides and as sensor of hydrogen peroxide-mediated signaling events. Involved in osmoadaptation. This is Putative peroxiredoxin prxA from Emericella nidulans (strain FGSC A4 / ATCC 38163 / CBS 112.46 / NRRL 194 / M139) (Aspergillus nidulans).